We begin with the raw amino-acid sequence, 507 residues long: WD-40 repeat-containing protein MSI4 (507 aa).

M1 is subject to N-acetylmethionine. The segment at 1–66 is disordered; sequence MESDEAAAVS…KTQQSPSVDE (66 aa). WD repeat units lie at residues 95–137, 162–202, and 217–257; these read RWGP…KPRV, IHPG…NRHA, and GHQD…TTIG. Positions 258-272 are enriched in polar residues; sequence TDSKSSGSIIKQTGE. The tract at residues 258–282 is disordered; sequence TDSKSSGSIIKQTGEGTDKNESPTV. WD repeat units follow at residues 290 to 330, 335 to 375, 384 to 424, and 439 to 486; these read GHED…NPVT, AHDA…ANGV, GHKA…KKSD, and GHRD…YRPE. The short motif at 308 to 323 is the DWD box element; it reads FCSVGDDSCLILWDAR.

It belongs to the WD repeat RBAP46/RBAP48/MSI1 family. In terms of assembly, interacts with AHL16 and HOS1. Interacts with LHP1, PDP1, PDP2 and PDP3. Component of the PRC2 (polycomb repressive complex 2) complex which regulates histone methylation on histone H3K27. Expressed in rosette leaves, cauline leaves, main stems and developing fruits. Expressed at higher levels in roots and flowers.

The protein localises to the nucleus. Its function is as follows. Core histone-binding subunit that may target chromatin assembly factors, chromatin remodeling factors and histone deacetylases to their histone substrates in a manner that is regulated by nucleosomal DNA. Component of the flowering autonomous pathway which positively regulates flowering by promoting transcriptional repression of the flowering repressor FLC. May promote histone deacetylation at the FLC locus leading to the formation of repressive chromatin structures. Forms a histone deacetylase complex with HDA5, HDA6 and FLD that represses FLC gene expression to control flowering time. Also negatively regulates cold-responsive genes. Acts together with PDP1 and MSI5 to regulate the function of the PRC2 complex on FLC. Required for systemic acquired resistance (SAR) toward pathogenic bacteria (e.g. Pseudomonas syringae pv tomato DC3000 (avrPto)). Together with FLD and MSI4/FVE, contributes to dehydroabietinal-dependent (DA, a diterpenoid tricyclic diterpene) activation of flowering ans SAR. The chain is WD-40 repeat-containing protein MSI4 from Arabidopsis thaliana (Mouse-ear cress).